Consider the following 358-residue polypeptide: Probable arabinan endo-1,5-alpha-L-arabinosidase B (358 aa).

The N-terminal stretch at 1 to 16 (MVLVATLFSLFTVSLC) is a signal peptide. The active-site Proton acceptor is the aspartate 39. Asparagine 194 carries N-linked (GlcNAc...) asparagine glycosylation. Positions 202 to 227 (HLAKHPKTERVNSQDQNPDPLCRDSS) are disordered. Catalysis depends on glutamate 233, which acts as the Proton donor.

This sequence belongs to the glycosyl hydrolase 43 family.

It localises to the secreted. The catalysed reaction is Endohydrolysis of (1-&gt;5)-alpha-arabinofuranosidic linkages in (1-&gt;5)-arabinans.. It participates in glycan metabolism; L-arabinan degradation. Its function is as follows. Endo-1,5-alpha-L-arabinanase involved in degradation of pectin. Its preferred substrate is linear 1,5-alpha-L-arabinan. The polypeptide is Probable arabinan endo-1,5-alpha-L-arabinosidase B (abnB) (Aspergillus flavus (strain ATCC 200026 / FGSC A1120 / IAM 13836 / NRRL 3357 / JCM 12722 / SRRC 167)).